The primary structure comprises 186 residues: Prorelaxin 1 (186 aa).

Positions 1 to 22 (MSSRLLLQLLGFWLFLSQPCRA) are cleaved as a signal peptide. 3 cysteine pairs are disulfide-bonded: C36-C173, C48-C186, and C172-C177. The propeptide at 58–158 (SQEEPAPLAR…LKYLGSDAQS (101 aa)) is connecting peptide. Q163 is modified (pyrrolidone carboxylic acid).

It belongs to the insulin family. As to quaternary structure, heterodimer of a B chain and an A chain linked by two disulfide bonds.

The protein localises to the secreted. In terms of biological role, relaxin is an ovarian hormone that acts with estrogen to produce dilatation of the birth canal in many mammals. The sequence is that of Prorelaxin 1 (Rln1) from Rattus norvegicus (Rat).